The sequence spans 324 residues: uncharacterized protein (324 aa).

This is an uncharacterized protein from Methanocaldococcus jannaschii (strain ATCC 43067 / DSM 2661 / JAL-1 / JCM 10045 / NBRC 100440) (Methanococcus jannaschii).